A 348-amino-acid chain; its full sequence is GPALPP motifs-containing protein 1 (348 aa).

Disordered stretches follow at residues 1–163 and 177–317; these read MARD…AKGP and QRMK…DLKV. N-acetylalanine is present on alanine 2. Positions 7-12 match the GPALPP motif 1 motif; it reads GPALPP. Over residues 14–27 the composition is skewed to basic and acidic residues; the sequence is FKERATVEDQERDP. Serine 28 is subject to Phosphoserine. Residues 32–37 carry the GPALPP motif 2 motif; that stretch reads GPALPP. The span at 41-59 shows a compositional bias: low complexity; it reads SSSSDSSDSNEDSSSLSEE. Residues 60 to 69 show a composition bias toward acidic residues; the sequence is GNQESEEDDA. The GPALPP motif 3 motif lies at 93–98; sequence GPALPP. Position 106 is a phosphoserine (serine 106). A compositionally biased stretch (pro residues) spans 108–117; that stretch reads PRPIIGPALP. Positions 113 to 118 match the GPALPP motif 4 motif; that stretch reads GPALPP. A phosphoserine mark is found at serine 138, serine 143, and serine 148. Residues 144–154 are compositionally biased toward acidic residues; it reads EEAESGEDEDI. 4 stretches are compositionally biased toward basic and acidic residues: residues 177 to 195, 235 to 269, 277 to 287, and 295 to 317; these read QRMK…KPVT, PADR…KRLA, ESKRSESLMDI, and KAAE…DLKV. Glycyl lysine isopeptide (Lys-Gly) (interchain with G-Cter in SUMO2) cross-links involve residues lysine 279 and lysine 316.

The sequence is that of GPALPP motifs-containing protein 1 (Gpalpp1) from Rattus norvegicus (Rat).